The primary structure comprises 304 residues: Recombination-associated protein RdgC (304 aa).

The protein belongs to the RdgC family.

It localises to the cytoplasm. The protein resides in the nucleoid. May be involved in recombination. The sequence is that of Recombination-associated protein RdgC from Shewanella baltica (strain OS223).